The chain runs to 156 residues: 2-C-methyl-D-erythritol 2,4-cyclodiphosphate synthase (156 aa).

Positions 9 and 11 each coordinate a divalent metal cation. 4-CDP-2-C-methyl-D-erythritol 2-phosphate is bound by residues Asp-9 to His-11 and His-35 to Ser-36. His-43 contacts a divalent metal cation. Residue Asp-57–Gly-59 participates in 4-CDP-2-C-methyl-D-erythritol 2-phosphate binding.

The protein belongs to the IspF family. Homotrimer. A divalent metal cation serves as cofactor.

It carries out the reaction 4-CDP-2-C-methyl-D-erythritol 2-phosphate = 2-C-methyl-D-erythritol 2,4-cyclic diphosphate + CMP. Its pathway is isoprenoid biosynthesis; isopentenyl diphosphate biosynthesis via DXP pathway; isopentenyl diphosphate from 1-deoxy-D-xylulose 5-phosphate: step 4/6. Involved in the biosynthesis of isopentenyl diphosphate (IPP) and dimethylallyl diphosphate (DMAPP), two major building blocks of isoprenoid compounds. Catalyzes the conversion of 4-diphosphocytidyl-2-C-methyl-D-erythritol 2-phosphate (CDP-ME2P) to 2-C-methyl-D-erythritol 2,4-cyclodiphosphate (ME-CPP) with a corresponding release of cytidine 5-monophosphate (CMP). In Hydrogenobaculum sp. (strain Y04AAS1), this protein is 2-C-methyl-D-erythritol 2,4-cyclodiphosphate synthase.